The chain runs to 122 residues: Large ribosomal subunit protein uL14 (122 aa).

It belongs to the universal ribosomal protein uL14 family. As to quaternary structure, part of the 50S ribosomal subunit. Forms a cluster with proteins L3 and L19. In the 70S ribosome, L14 and L19 interact and together make contacts with the 16S rRNA in bridges B5 and B8.

Its function is as follows. Binds to 23S rRNA. Forms part of two intersubunit bridges in the 70S ribosome. In Nitratidesulfovibrio vulgaris (strain ATCC 29579 / DSM 644 / CCUG 34227 / NCIMB 8303 / VKM B-1760 / Hildenborough) (Desulfovibrio vulgaris), this protein is Large ribosomal subunit protein uL14.